A 1004-amino-acid polypeptide reads, in one-letter code: 2-oxoglutarate dehydrogenase E1 component (1004 aa).

The protein belongs to the alpha-ketoglutarate dehydrogenase family. As to quaternary structure, homodimer. Part of the 2-oxoglutarate dehydrogenase (OGDH) complex composed of E1 (2-oxoglutarate dehydrogenase), E2 (dihydrolipoamide succinyltransferase) and E3 (dihydrolipoamide dehydrogenase); the complex contains multiple copies of the three enzymatic components (E1, E2 and E3). Thiamine diphosphate is required as a cofactor.

The enzyme catalyses N(6)-[(R)-lipoyl]-L-lysyl-[protein] + 2-oxoglutarate + H(+) = N(6)-[(R)-S(8)-succinyldihydrolipoyl]-L-lysyl-[protein] + CO2. In terms of biological role, E1 component of the 2-oxoglutarate dehydrogenase (OGDH) complex which catalyzes the decarboxylation of 2-oxoglutarate, the first step in the conversion of 2-oxoglutarate to succinyl-CoA and CO(2). This is 2-oxoglutarate dehydrogenase E1 component from Brucella abortus (strain S19).